We begin with the raw amino-acid sequence, 185 residues long: Protein LPA2 (185 aa).

The transit peptide at 1-46 (MALQIHSPCSFSTRPYHLFFTTRNPRFAIKCQNSQIESDTTEDPSR) directs the protein to the chloroplast. Residues 35–105 (QIESDTTEDP…VFMSEEGAAK (71 aa)) form a disordered region. Residues 47–75 (SKNSSSSGVGFGSPASSSSPAKKLSAATS) show a composition bias toward low complexity. The segment covering 83–92 (KREVNRRAPV) has biased composition (basic and acidic residues). Transmembrane regions (helical) follow at residues 115 to 135 (AFLL…IILA) and 152 to 172 (VYPV…AYGV).

Its subcellular location is the plastid. The protein resides in the chloroplast membrane. The protein is Protein LPA2 of Arabidopsis thaliana (Mouse-ear cress).